A 1129-amino-acid polypeptide reads, in one-letter code: MSSLSRELVFLILQFLDEEKFKETVHKLEQESGFFFNMKYFEEKVHAGEWDEVEKYLSGFTKVDDNRYSMKIFFEIRKQKYLEALDRHDRAKAVDILVKDLKVFSTFNEELYKEITQLLTLENFRENEQLSKYGDTKSARSIMLIELKKLIEANPLFREKLVFPTLKASRLRTLINQSLNWQHQLCKNPRPNPDIKTLFTDHTCTPPNGARASPVSVPLAAVPKAGGTYPPLTAHTPFQPPPAGPSLAGWMANAAAATSSVPSAVVAASSLPVPPNQAVPIMKRPTITDYQSAESEQLMKRLRPSGHGVDEATYPAPIPQPLWSVEDLPRTVACTLSQGSSVTSMDFHPTRHTLLLVGSTNGEITLWEVGMRERLFSKPFKIWDIQACSPQFQSVAKESSISINRVTWSPDGDLIGVAFAKHLIHLHAYQQPNETRQVLEIDAHSGAVNDIAFSRPNKQLCVVTCGDDRLIKVWDMHGQKLFSFEGHEAPVYSICPHHKESIQFIFSTSLDGKIKAWLYDHMGSRVDYDAPGKWCTTMLYSADGTRLFSCGTSKDGDSYLVEWNESEGSIKRTYSGFRKKSAGVGVVQFDTAQNHILAAGEDNQIKFWDVDNTTMLSSTEADGGLPGLPRLRFNKEGNLLAVTTVDNGFKILANADGLRTLRAFGNRPFEAFRSQYEASSMKVSGAPVVAGISPNIGRMDHIDRNSPAKPSPIMNGGDPASRSIDIKPRISEERPDKAKPWELMEVLNAQQCRVATMPETPDQASKVVRLLYTNSGVGLLALGSNAIQRLWKWARNDQNPSGKATANVVPQHWQPNSGLVMQNDTADTNPEDAVPCIALSKNDSYVMSACGGKVSLFNMMTFKVMTTFMPPPPASTFLAFHPQDNNIIAIGMEDSTIHIYNVRVDEVKTRLKGHQRRITGLAFSNNLQILVSSGADAQLCVWATDTWEKKKSVAIQMPAGKTPSGDTWVQFNSDWSRLLVVHETQLAIYDASKMERIYQWIPQDALSAPISHASYSRNSQLVFAAFTDGNIGIFDVENLRLRCRIAPPAYLSSAAINSNPSVYPLVVAAHPQESNQFAVGLSDGSVKVIEPLESEGKWGTTPPTENGVPNGRTSTSSATSNPAADQIQR.

Residues 4–36 form the LisH domain; that stretch reads LSRELVFLILQFLDEEKFKETVHKLEQESGFFF. One can recognise a CTLH domain in the interval 34-92; the sequence is FFFNMKYFEEKVHAGEWDEVEKYLSGFTKVDDNRYSMKIFFEIRKQKYLEALDRHDRAK. 11 WD repeats span residues 337–377, 398–437, 443–485, 487–527, 579–618, 623–662, 762–801, 829–867, 870–910, 913–952, and 1005–1044; these read SQGS…RLFS, ESSISINRVTWSPDGDLIGVAFAKHLIHLHAYQQPNETRQ, AHSG…FSFE, HEAP…SRVD, KKSAGVGVVQFDTAQNHILAAGEDNQIKFWDVDNTTMLSS, GGLPGLPRLRFNKEGNLLAVTTVDNGFKILANADGLRTLR, DQASKVVRLLYTNSGVGLLALGSNAIQRLWKWARNDQNPS, NPEDAVPCIALSKNDSYVMSACGGKVSLFNMMTFKVMTT, PPPP…VKTR, GHQRRITGLAFSNNLQILVSSGADAQLCVWATDTWEKKKS, and ALSAPISHASYSRNSQLVFAAFTDGNIGIFDVENLRLRCR. A disordered region spans residues 1092–1129; sequence LESEGKWGTTPPTENGVPNGRTSTSSATSNPAADQIQR. Low complexity predominate over residues 1113–1129; it reads TSTSSATSNPAADQIQR.

Tetramer. Interacts with D53. Interacts with WOX1. Interacts with MOF1. In terms of tissue distribution, expressed in panicles, stems, leaves, spikelets and seed endosperm.

Functionally, probable downstream regulator of strigolactones signaling. This is Protein TPR1 from Oryza sativa subsp. japonica (Rice).